A 106-amino-acid polypeptide reads, in one-letter code: Putative double-stranded DNA mimic protein VP1949 (106 aa).

It belongs to the putative dsDNA mimic protein family.

May act as a double-stranded DNA (dsDNA) mimic. Probably regulates the activity of a dsDNA-binding protein. This is Putative double-stranded DNA mimic protein VP1949 from Vibrio parahaemolyticus serotype O3:K6 (strain RIMD 2210633).